A 695-amino-acid polypeptide reads, in one-letter code: DNA ligase (695 aa).

Residues 39–43, 88–89, and Glu-124 contribute to the NAD(+) site; these read DAEYD and SL. Lys-126 acts as the N6-AMP-lysine intermediate in catalysis. 4 residues coordinate NAD(+): Arg-147, Glu-183, Lys-299, and Lys-323. Residues Cys-419, Cys-422, Cys-437, and Cys-443 each contribute to the Zn(2+) site. A BRCT domain is found at 612–695; sequence PAQGHLSGKT…ELAGIGPVGP (84 aa).

It belongs to the NAD-dependent DNA ligase family. LigA subfamily. Mg(2+) serves as cofactor. It depends on Mn(2+) as a cofactor.

It carries out the reaction NAD(+) + (deoxyribonucleotide)n-3'-hydroxyl + 5'-phospho-(deoxyribonucleotide)m = (deoxyribonucleotide)n+m + AMP + beta-nicotinamide D-nucleotide.. DNA ligase that catalyzes the formation of phosphodiester linkages between 5'-phosphoryl and 3'-hydroxyl groups in double-stranded DNA using NAD as a coenzyme and as the energy source for the reaction. It is essential for DNA replication and repair of damaged DNA. The polypeptide is DNA ligase (Gluconacetobacter diazotrophicus (strain ATCC 49037 / DSM 5601 / CCUG 37298 / CIP 103539 / LMG 7603 / PAl5)).